We begin with the raw amino-acid sequence, 328 residues long: DNA-directed RNA polymerase subunit alpha (328 aa).

Residues 1–232 form an alpha N-terminal domain (alpha-NTD) region; the sequence is MSTQGFLKPR…DQISVFAALE (232 aa). The tract at residues 248-328 is alpha C-terminal domain (alpha-CTD); sequence IDPVLLRPVD…NWPPLGLERP (81 aa).

Belongs to the RNA polymerase alpha chain family. Homodimer. The RNAP catalytic core consists of 2 alpha, 1 beta, 1 beta' and 1 omega subunit. When a sigma factor is associated with the core the holoenzyme is formed, which can initiate transcription.

The enzyme catalyses RNA(n) + a ribonucleoside 5'-triphosphate = RNA(n+1) + diphosphate. Functionally, DNA-dependent RNA polymerase catalyzes the transcription of DNA into RNA using the four ribonucleoside triphosphates as substrates. The chain is DNA-directed RNA polymerase subunit alpha from Bordetella avium (strain 197N).